A 213-amino-acid chain; its full sequence is KHG/KDPG aldolase (213 aa).

Glu45 (proton acceptor) is an active-site residue. Residues Arg49, Thr73, and Lys133 each contribute to the pyruvate site. The Schiff-base intermediate with substrate role is filled by Lys133.

It belongs to the KHG/KDPG aldolase family. As to quaternary structure, homotrimer.

It is found in the cytoplasm. It carries out the reaction 2-dehydro-3-deoxy-6-phospho-D-gluconate = D-glyceraldehyde 3-phosphate + pyruvate. It catalyses the reaction (4S)-4-hydroxy-2-oxoglutarate = glyoxylate + pyruvate. It participates in carbohydrate acid metabolism; 2-dehydro-3-deoxy-D-gluconate degradation; D-glyceraldehyde 3-phosphate and pyruvate from 2-dehydro-3-deoxy-D-gluconate: step 2/2. The protein operates within carbohydrate metabolism; glyoxylate and dicarboxylate metabolism. Involved in the degradation of glucose via the Entner-Doudoroff pathway. Catalyzes the reversible, stereospecific retro-aldol cleavage of 2-keto-3-deoxy-6-phosphogluconate (KDPG) to pyruvate and D-glyceraldehyde-3-phosphate. In addition to its KDPG aldolase activity, catalyzes the reversible cleavage of 2-keto-4-hydroxyglutarate (KHG) to glyoxylate and pyruvate. The enzyme is stereoselective for the S-enantiomer of KHG. Cleavage of KHG could serve in tricarboxylic acid (TCA) cycle regulation or, when operating in the reverse direction, in the detoxification of glyoxylate. The protein is KHG/KDPG aldolase (eda) of Escherichia coli O157:H7.